The following is a 376-amino-acid chain: Probable dual-specificity RNA methyltransferase RlmN (376 aa).

Catalysis depends on Glu96, which acts as the Proton acceptor. The Radical SAM core domain occupies 102 to 346; the sequence is YPDRSTVCVS…CTVRVERGVE (245 aa). A disulfide bridge connects residues Cys109 and Cys351. [4Fe-4S] cluster is bound by residues Cys116, Cys120, and Cys123. S-adenosyl-L-methionine-binding positions include 171-172, Ser203, 226-228, and Asn308; these read GE and SLH. The active-site S-methylcysteine intermediate is Cys351.

It belongs to the radical SAM superfamily. RlmN family. Requires [4Fe-4S] cluster as cofactor.

The protein resides in the cytoplasm. The enzyme catalyses adenosine(2503) in 23S rRNA + 2 reduced [2Fe-2S]-[ferredoxin] + 2 S-adenosyl-L-methionine = 2-methyladenosine(2503) in 23S rRNA + 5'-deoxyadenosine + L-methionine + 2 oxidized [2Fe-2S]-[ferredoxin] + S-adenosyl-L-homocysteine. It carries out the reaction adenosine(37) in tRNA + 2 reduced [2Fe-2S]-[ferredoxin] + 2 S-adenosyl-L-methionine = 2-methyladenosine(37) in tRNA + 5'-deoxyadenosine + L-methionine + 2 oxidized [2Fe-2S]-[ferredoxin] + S-adenosyl-L-homocysteine. In terms of biological role, specifically methylates position 2 of adenine 2503 in 23S rRNA and position 2 of adenine 37 in tRNAs. The protein is Probable dual-specificity RNA methyltransferase RlmN of Chloroflexus aurantiacus (strain ATCC 29366 / DSM 635 / J-10-fl).